The chain runs to 573 residues: MLO-like protein 2 (573 aa).

Over 1–15 (MADQVKERTLEETST) the chain is Extracellular. A helical membrane pass occupies residues 16–36 (WAVAVVCFVLLFISIVLEHSI). At 37–61 (HKIGTWFKKKHKQALFEALEKVKAE) the chain is on the cytoplasmic side. Residues 62–82 (LMLLGFISLLLTIGQTPISNI) form a helical membrane-spanning segment. Residues 83–164 (CISQKVASTM…VSAYGIHQLH (82 aa)) are Extracellular-facing. A helical transmembrane segment spans residues 165-185 (IFIFVLAVVHVVYCIVTYAFG). Residues 186–287 (KIKMRTWKSW…KYIQRSLEKD (102 aa)) lie on the Cytoplasmic side of the membrane. A helical membrane pass occupies residues 288 to 308 (FKTVVEISPVIWFVAVLFLLT). The Extracellular segment spans residues 309–317 (NSYGLRSYL). A helical membrane pass occupies residues 318–338 (WLPFIPLVVILIVGTKLEVII). The Cytoplasmic segment spans residues 339-371 (TKLGLRIQEKGDVVRGAPVVQPGDDLFWFGKPR). Residues 372 to 392 (FILFLIHLVLFTNAFQLAFFA) traverse the membrane as a helical segment. Residues 393-415 (WSTYEFNLNNCFHESTADVVIRL) lie on the Extracellular side of the membrane. A helical membrane pass occupies residues 416–436 (VVGAVVQILCSYVTLPLYALV). Topologically, residues 437–573 (TQMGSKMKPT…KSLRDFSFKK (137 aa)) are cytoplasmic. A calmodulin-binding region spans residues 450-471 (DRVATALKKWHHTAKNETKHGR). Residues 462–573 (TAKNETKHGR…KSLRDFSFKK (112 aa)) form a disordered region. Composition is skewed to polar residues over residues 473-490 (SGSN…THGS) and 498-513 (NFNN…SPSP). Position 512 is a phosphoserine (Ser512). Residues 522 to 548 (EHQFWDPESQHQEAETSTHHSLAHESS) are compositionally biased toward basic and acidic residues.

It belongs to the MLO family.

It localises to the membrane. In terms of biological role, may be involved in modulation of pathogen defense and leaf cell death. Activity seems to be regulated by Ca(2+)-dependent calmodulin binding and seems not to require heterotrimeric G proteins. The protein is MLO-like protein 2 (MLO2) of Arabidopsis thaliana (Mouse-ear cress).